We begin with the raw amino-acid sequence, 472 residues long: Glutamate synthase [NADPH] small chain (472 aa).

The 4Fe-4S ferredoxin-type domain maps to 38 to 69; sequence GQAKAQADRCLSCGNPYCEWKCPVHNYIPNWL. 4 residues coordinate [4Fe-4S] cluster: cysteine 47, cysteine 50, cysteine 55, and cysteine 59.

Aggregate of 4 catalytic active heterodimers, consisting of a large and a small subunit. [4Fe-4S] cluster is required as a cofactor.

The enzyme catalyses 2 L-glutamate + NADP(+) = L-glutamine + 2-oxoglutarate + NADPH + H(+). The protein operates within amino-acid biosynthesis; L-glutamate biosynthesis via GLT pathway; L-glutamate from 2-oxoglutarate and L-glutamine (NADP(+) route): step 1/1. It participates in energy metabolism; nitrogen metabolism. Catalyzes the conversion of L-glutamine and 2-oxoglutarate into two molecules of L-glutamate. This is Glutamate synthase [NADPH] small chain (gltD) from Escherichia coli (strain K12).